We begin with the raw amino-acid sequence, 811 residues long: MNRKNHYHFIGIGGIGMSALAHILLDRGYSVSGSDLNQGITIDKLIAKGAAYLPGHKESYVPEEGTIIYGSGIAKDNVEYKEALRKQLPLVHRAELLALLMQEQTSILVSGSHGKTTVSSLITAIFQTAKKDPSYAIGGLNSQYLNGYSGSSEYFIAEADESDGSLKHYFPKVAVVTNLDNEHLSNFEGSKEKLAQTIEEFTRKVDDPNLCFYNGDCQELKGRISGISYGFSQECALYIYSHRQEGWRSVFSLSFLGKDYLDIDLNLIGKHNVANAAAAIGVALTFGIDEESIREALKSFSGVQRRMERKNTSEKFLFLEDYAHHPSEISCTLRALRDAVGLRRIIAICQPHRFSRLLYCLEEFFNAFQDADEVILTDVYSAGEMPLDLPSPEKLAETISLSSHVCCTYVPYDNVIEHLKQNIRVHDVCISLGAGNIHTVGNALKDFEPKKLSVGVVCGGQSCEHDVSLLSARNVVQYLSPQHYDVQYFVINRQGLWSQVANLDAGSDYNSKNYHVLSSKIAEALANLDFVLPILHGPFGEDGTLQGFLEIANKPYGGPSLLFSAISMDKIMTKRLAASVGVPVVPYQPLTLPTWKRTPELCMRRILETFTFPMFVKTAHLGSSIGVFEVHNETELKAKISEAFLYDTDVFIEESRLGSREIEVSCLGDACSCYYISEPHERRGSKGFIGYEEKYGFNGKSSATIQYDLNLSEESKTRVKELTERVYRVIQGKGSCRIDFFLDREGNFWLSEMNPIPGMTKSSPFLHDFARLGWTFEQIVHQLIIAGLHKFDQKKKVSSTFNKQCLLTAKS.

Residues 1 to 450 (MNRKNHYHFI…GNALKDFEPK (450 aa)) form a UDP-N-acetylmuramate--alanine ligase region. ATP contacts are provided by residues 111 to 117 (GSHGKTT) and 607 to 662 (LETF…SREI). The D-alanine--D-alanine ligase stretch occupies residues 451–811 (KLSVGVVCGG…NKQCLLTAKS (361 aa)). The ATP-grasp domain occupies 574 to 785 (KRLAASVGVP…FEQIVHQLII (212 aa)). Mg(2+) contacts are provided by Asp739, Glu752, and Asn754.

This sequence in the N-terminal section; belongs to the MurCDEF family. In the C-terminal section; belongs to the D-alanine--D-alanine ligase family. It depends on Mg(2+) as a cofactor. Requires Mn(2+) as cofactor.

The protein resides in the cytoplasm. The catalysed reaction is UDP-N-acetyl-alpha-D-muramate + L-alanine + ATP = UDP-N-acetyl-alpha-D-muramoyl-L-alanine + ADP + phosphate + H(+). It carries out the reaction 2 D-alanine + ATP = D-alanyl-D-alanine + ADP + phosphate + H(+). Its pathway is cell wall biogenesis; peptidoglycan biosynthesis. In Chlamydia caviae (strain ATCC VR-813 / DSM 19441 / 03DC25 / GPIC) (Chlamydophila caviae), this protein is Bifunctional enzyme MurC/Ddl (murC/ddlA).